The following is a 615-amino-acid chain: Dihydroxy-acid dehydratase (615 aa).

Position 81 (D81) interacts with Mg(2+). C122 is a [2Fe-2S] cluster binding site. D123 and K124 together coordinate Mg(2+). K124 is modified (N6-carboxylysine). [2Fe-2S] cluster is bound at residue C193. E489 contributes to the Mg(2+) binding site. The active-site Proton acceptor is S515.

It belongs to the IlvD/Edd family. In terms of assembly, homodimer. It depends on [2Fe-2S] cluster as a cofactor. The cofactor is Mg(2+).

It carries out the reaction (2R)-2,3-dihydroxy-3-methylbutanoate = 3-methyl-2-oxobutanoate + H2O. The enzyme catalyses (2R,3R)-2,3-dihydroxy-3-methylpentanoate = (S)-3-methyl-2-oxopentanoate + H2O. It participates in amino-acid biosynthesis; L-isoleucine biosynthesis; L-isoleucine from 2-oxobutanoate: step 3/4. The protein operates within amino-acid biosynthesis; L-valine biosynthesis; L-valine from pyruvate: step 3/4. Its function is as follows. Functions in the biosynthesis of branched-chain amino acids. Catalyzes the dehydration of (2R,3R)-2,3-dihydroxy-3-methylpentanoate (2,3-dihydroxy-3-methylvalerate) into 2-oxo-3-methylpentanoate (2-oxo-3-methylvalerate) and of (2R)-2,3-dihydroxy-3-methylbutanoate (2,3-dihydroxyisovalerate) into 2-oxo-3-methylbutanoate (2-oxoisovalerate), the penultimate precursor to L-isoleucine and L-valine, respectively. The polypeptide is Dihydroxy-acid dehydratase (Pseudomonas savastanoi pv. phaseolicola (strain 1448A / Race 6) (Pseudomonas syringae pv. phaseolicola (strain 1448A / Race 6))).